A 331-amino-acid chain; its full sequence is GTP 3',8-cyclase (331 aa).

The Radical SAM core domain maps to 9–233 (SFGRQVTYVR…TATNEHTGGP (225 aa)). R18 serves as a coordination point for GTP. Residues C25 and C29 each contribute to the [4Fe-4S] cluster site. An S-adenosyl-L-methionine-binding site is contributed by Y31. C32 provides a ligand contact to [4Fe-4S] cluster. R67 is a binding site for GTP. G71 serves as a coordination point for S-adenosyl-L-methionine. Residue T98 participates in GTP binding. S122 is a binding site for S-adenosyl-L-methionine. K159 contacts GTP. S-adenosyl-L-methionine is bound at residue M193. The [4Fe-4S] cluster site is built by C257 and C260. 262–264 (RVR) provides a ligand contact to GTP. Position 274 (C274) interacts with [4Fe-4S] cluster.

This sequence belongs to the radical SAM superfamily. MoaA family. In terms of assembly, monomer and homodimer. [4Fe-4S] cluster serves as cofactor.

It carries out the reaction GTP + AH2 + S-adenosyl-L-methionine = (8S)-3',8-cyclo-7,8-dihydroguanosine 5'-triphosphate + 5'-deoxyadenosine + L-methionine + A + H(+). It participates in cofactor biosynthesis; molybdopterin biosynthesis. Its function is as follows. Catalyzes the cyclization of GTP to (8S)-3',8-cyclo-7,8-dihydroguanosine 5'-triphosphate. The polypeptide is GTP 3',8-cyclase (Saccharophagus degradans (strain 2-40 / ATCC 43961 / DSM 17024)).